The sequence spans 425 residues: Enolase (425 aa).

Position 163 (Q163) interacts with (2R)-2-phosphoglycerate. E205 serves as the catalytic Proton donor. Mg(2+) contacts are provided by D242, E286, and D313. The (2R)-2-phosphoglycerate site is built by K338, R367, S368, and K389. K338 serves as the catalytic Proton acceptor.

Belongs to the enolase family. Requires Mg(2+) as cofactor.

The protein resides in the cytoplasm. It localises to the secreted. It is found in the cell surface. The enzyme catalyses (2R)-2-phosphoglycerate = phosphoenolpyruvate + H2O. It functions in the pathway carbohydrate degradation; glycolysis; pyruvate from D-glyceraldehyde 3-phosphate: step 4/5. Its function is as follows. Catalyzes the reversible conversion of 2-phosphoglycerate (2-PG) into phosphoenolpyruvate (PEP). It is essential for the degradation of carbohydrates via glycolysis. This is Enolase from Lactobacillus delbrueckii subsp. bulgaricus (strain ATCC 11842 / DSM 20081 / BCRC 10696 / JCM 1002 / NBRC 13953 / NCIMB 11778 / NCTC 12712 / WDCM 00102 / Lb 14).